The sequence spans 247 residues: Chymase (247 aa).

The signal sequence occupies residues 1-17 (MCLLSLPLLLFLQYTRA). Residues 18-21 (KAGE) constitute a propeptide, activation peptide. Positions 22 to 245 (VIGGTECKPH…YRPWINKILK (224 aa)) constitute a Peptidase S1 domain. C51 and C67 form a disulfide bridge. Catalysis depends on H66, which acts as the Charge relay system. An N-linked (GlcNAc...) asparagine glycan is attached at N103. The active-site Charge relay system is D110. Residue N121 is glycosylated (N-linked (GlcNAc...) asparagine). 2 disulfide bridges follow: C144/C209 and C175/C188. The active-site Charge relay system is S203.

It belongs to the peptidase S1 family. Granzyme subfamily.

It is found in the secreted. It localises to the cytoplasmic granule. It carries out the reaction Preferential cleavage: Phe-|-Xaa &gt; Tyr-|-Xaa &gt; Trp-|-Xaa &gt; Leu-|-Xaa.. In terms of biological role, major secreted protease of mast cells with suspected roles in vasoactive peptide generation, extracellular matrix degradation, and regulation of gland secretion. This Cavia porcellus (Guinea pig) protein is Chymase.